A 601-amino-acid chain; its full sequence is MCGIVGYIGYDNAKELLLKGLEKLEYRGYDSAGIAVVNDDNTTVFKEKGRIAELRKVADSSDFDGPVGIGHTRWATHGVPNHENSHPHQSSNGRFTLVHNGVIENYEELKGEYLQGVSFISETDTEVIVQLVEYFSNQGLSTEEAFTKVVSLLHGSYALGLLDAEDKDTIYVAKNKSPLLLGVGEGFNVIASDALAMLQVTSEYKEIHDHEIVIVKKDEVIIKDADGNVVERDSYIAEIDASDAEKGVYAHYMLKEIHEQPAVMRRIIQEYQDAEGNLKIDQDIINDVKEADRIYVIAAGTSYHAGLVGKEFLEKWAGVPTEVHVASEFVYNMPLLSEKPLFVYISQSGETADSRAVLVETNKLGHKSLTITNVAGSTLSREADHTLLLHAGPEIAVASTKAYTAQIAVLSILSQIVAKEHGREADIDLLRELAKVTTAIEAIVDDAPIMEQIATDFLETTRNAFFIGRTIDYNVSLEGALKLKEISYIQAEGFAGGELKHGTIALIEEGTPVVGLATQEKVNLSIRGNVKEVVARGAHPCIISMEGLEKEGDTYVIPHVHELLTPLVSVVTLQLISYYAALHRDLDVDKPRNLAKSVTVE.

The Nucleophile; for GATase activity role is filled by Cys2. Residues 2-218 (CGIVGYIGYD…DHEIVIVKKD (217 aa)) enclose the Glutamine amidotransferase type-2 domain. 2 consecutive SIS domains span residues 284-423 (IIND…EHGR) and 453-591 (IATD…VDKP). Lys596 (for Fru-6P isomerization activity) is an active-site residue.

Homodimer.

The protein resides in the cytoplasm. It catalyses the reaction D-fructose 6-phosphate + L-glutamine = D-glucosamine 6-phosphate + L-glutamate. Its function is as follows. Catalyzes the first step in hexosamine metabolism, converting fructose-6P into glucosamine-6P using glutamine as a nitrogen source. The protein is Glutamine--fructose-6-phosphate aminotransferase [isomerizing] of Staphylococcus aureus (strain MRSA252).